Reading from the N-terminus, the 115-residue chain is MTNIIQEIEQEQLKENIPHFRPGDTVEVKVWVIEGSKKRLQSFEGIVISIKNRSLNSSFTVRKVSNGEGIERVFQTHSYSIDSIFVKRKGKVRKAKLYYLRTRTGKSARIKERIE.

It belongs to the bacterial ribosomal protein bL19 family.

Functionally, this protein is located at the 30S-50S ribosomal subunit interface and may play a role in the structure and function of the aminoacyl-tRNA binding site. The protein is Large ribosomal subunit protein bL19 of Buchnera aphidicola subsp. Schizaphis graminum (strain Sg).